A 457-amino-acid polypeptide reads, in one-letter code: Protein N-terminal amidase (457 aa).

The region spanning 19 to 453 (LKVLVIQLNP…EGAILREVQF (435 aa)) is the CN hydrolase domain. Glutamate 63 (proton acceptor) is an active-site residue. Residue lysine 136 is the Proton donor of the active site. The Nucleophile role is filled by cysteine 187.

It belongs to the carbon-nitrogen hydrolase superfamily.

Deamidates N-terminal Asn and Gln. Component of a targeting complex in the N-end rule pathway. This chain is Protein N-terminal amidase (NTA1), found in Saccharomyces cerevisiae (strain ATCC 204508 / S288c) (Baker's yeast).